We begin with the raw amino-acid sequence, 163 residues long: Transcription elongation factor GreB (163 aa).

A coiled-coil region spans residues 54–76 (GKRRMREIDRRIRFLTKRLEAAV).

This sequence belongs to the GreA/GreB family. GreB subfamily.

Its function is as follows. Necessary for efficient RNA polymerase transcription elongation past template-encoded arresting sites. The arresting sites in DNA have the property of trapping a certain fraction of elongating RNA polymerases that pass through, resulting in locked ternary complexes. Cleavage of the nascent transcript by cleavage factors such as GreA or GreB allows the resumption of elongation from the new 3'terminus. GreB releases sequences of up to 9 nucleotides in length. This chain is Transcription elongation factor GreB, found in Neisseria meningitidis serogroup B (strain ATCC BAA-335 / MC58).